A 292-amino-acid polypeptide reads, in one-letter code: Large ribosomal subunit protein mL67 (292 aa).

The interval 59–83 is disordered; sequence VELKSPSRLQLKSEPGNKGNPKGHG.

The protein belongs to the mitochondrion-specific ribosomal protein mL67 family. Component of the mitochondrial large ribosomal subunit (mt-LSU). Mature N.crassa 74S mitochondrial ribosomes consist of a small (37S) and a large (54S) subunit. The 37S small subunit contains a 16S ribosomal RNA (16S mt-rRNA) and 32 different proteins. The 54S large subunit contains a 23S rRNA (23S mt-rRNA) and 42 different proteins.

The protein resides in the mitochondrion. Its function is as follows. Component of the mitochondrial ribosome (mitoribosome), a dedicated translation machinery responsible for the synthesis of mitochondrial genome-encoded proteins, including at least some of the essential transmembrane subunits of the mitochondrial respiratory chain. The mitoribosomes are attached to the mitochondrial inner membrane and translation products are cotranslationally integrated into the membrane. mL67/MHR1 also has extraribosomal functions, being involved in regulation of mitochondrial DNA recombination, maintenance and repair, and generation of homoplasmic cells. mL67/MHR1 also acts as a transcription factor involved in regulation of RNA polymerase II-dependent transcription. The polypeptide is Large ribosomal subunit protein mL67 (mhr1) (Neurospora crassa (strain ATCC 24698 / 74-OR23-1A / CBS 708.71 / DSM 1257 / FGSC 987)).